The sequence spans 427 residues: Endothelin-1 receptor (427 aa).

The N-terminal stretch at Met-1–Ser-20 is a signal peptide. Residues Asp-21 to Lys-80 are Extracellular-facing. 2 N-linked (GlcNAc...) asparagine glycosylation sites follow: Asn-29 and Asn-62. The helical transmembrane segment at Tyr-81 to Leu-102 threads the bilayer. At Arg-103 to Arg-112 the chain is on the cytoplasmic side. A helical membrane pass occupies residues Asn-113–Ile-132. Over Asp-133–Lys-159 the chain is Extracellular. A disulfide bridge connects residues Cys-158 and Cys-239. The chain crosses the membrane as a helical span at residues Leu-160–Val-181. Topologically, residues Asp-182 to Glu-205 are cytoplasmic. The helical transmembrane segment at Ile-206–Phe-229 threads the bilayer. Topologically, residues Glu-230–Asp-256 are extracellular. A helical transmembrane segment spans residues Trp-257–Met-278. The Cytoplasmic portion of the chain corresponds to Thr-279–Lys-306. A helical transmembrane segment spans residues Thr-307–Leu-328. Residues Lys-329–Leu-347 are Extracellular-facing. Residues Leu-348–Val-372 form a helical membrane-spanning segment. The Cytoplasmic portion of the chain corresponds to Ser-373–Asn-427. Residue Ser-425 is modified to Phosphoserine.

It belongs to the G-protein coupled receptor 1 family. Endothelin receptor subfamily. EDNRA sub-subfamily. Interacts with HDAC7 and KAT5.

The protein localises to the cell membrane. Receptor for endothelin-1. Mediates its action by association with G proteins that activate a phosphatidylinositol-calcium second messenger system. The rank order of binding affinities for ET-A is: ET1 &gt; ET2 &gt;&gt; ET3. This Bos taurus (Bovine) protein is Endothelin-1 receptor.